The primary structure comprises 88 residues: CRISPR-associated endoribonuclease Cas2 2 (88 aa).

A Mg(2+)-binding site is contributed by Asp-8.

The protein belongs to the CRISPR-associated endoribonuclease Cas2 protein family. As to quaternary structure, homodimer, forms a heterotetramer with a Cas1 homodimer. It depends on Mg(2+) as a cofactor.

Functionally, CRISPR (clustered regularly interspaced short palindromic repeat), is an adaptive immune system that provides protection against mobile genetic elements (viruses, transposable elements and conjugative plasmids). CRISPR clusters contain sequences complementary to antecedent mobile elements and target invading nucleic acids. CRISPR clusters are transcribed and processed into CRISPR RNA (crRNA). Functions as a ssRNA-specific endoribonuclease. Involved in the integration of spacer DNA into the CRISPR cassette. The protein is CRISPR-associated endoribonuclease Cas2 2 (cas22) of Saccharolobus solfataricus (strain ATCC 35092 / DSM 1617 / JCM 11322 / P2) (Sulfolobus solfataricus).